A 181-amino-acid polypeptide reads, in one-letter code: CASP-like protein 2C1 (181 aa).

Topologically, residues 1–7 (MALEIPK) are cytoplasmic. Residues 8–28 (IEAILRGIAILLLVSTACLVG) traverse the membrane as a helical segment. The Extracellular portion of the chain corresponds to 29–49 (LDSQTKFVIVYEKEVTYKDLH). Residues 50 to 70 (ALVVLVYVDAVAAAYNLLQLC) traverse the membrane as a helical segment. The Cytoplasmic segment spans residues 71 to 98 (RCSVSALSKGNFKGSYRYLSWACFVLDQ). Residues 99–119 (LAAYTTFAAHSAALQHSVLGI) form a helical membrane-spanning segment. Topologically, residues 120-140 (TGAKVFQWMKWCNRFTRFCFQ) are extracellular. The chain crosses the membrane as a helical span at residues 141-161 (IGGALTCGYIASVLMVMISFI). At 162-181 (SAFNLFRLYSPKHFLRLKGT) the chain is on the cytoplasmic side.

It belongs to the Casparian strip membrane proteins (CASP) family. Homodimer and heterodimers.

The protein localises to the cell membrane. In Populus trichocarpa (Western balsam poplar), this protein is CASP-like protein 2C1.